The sequence spans 413 residues: Serine hydroxymethyltransferase (413 aa).

Residues Leu-117 and 121–123 contribute to the (6S)-5,6,7,8-tetrahydrofolate site; that span reads GHL. Lys-226 carries the post-translational modification N6-(pyridoxal phosphate)lysine. Residue 349–351 coordinates (6S)-5,6,7,8-tetrahydrofolate; sequence SPF.

Belongs to the SHMT family. In terms of assembly, homodimer. The cofactor is pyridoxal 5'-phosphate.

The protein localises to the cytoplasm. It carries out the reaction (6R)-5,10-methylene-5,6,7,8-tetrahydrofolate + glycine + H2O = (6S)-5,6,7,8-tetrahydrofolate + L-serine. It functions in the pathway one-carbon metabolism; tetrahydrofolate interconversion. It participates in amino-acid biosynthesis; glycine biosynthesis; glycine from L-serine: step 1/1. In terms of biological role, catalyzes the reversible interconversion of serine and glycine with tetrahydrofolate (THF) serving as the one-carbon carrier. This reaction serves as the major source of one-carbon groups required for the biosynthesis of purines, thymidylate, methionine, and other important biomolecules. Also exhibits THF-independent aldolase activity toward beta-hydroxyamino acids, producing glycine and aldehydes, via a retro-aldol mechanism. This Listeria innocua serovar 6a (strain ATCC BAA-680 / CLIP 11262) protein is Serine hydroxymethyltransferase.